We begin with the raw amino-acid sequence, 297 residues long: Acetylglutamate kinase (297 aa).

Substrate is bound by residues 70 to 71 (GG), arginine 92, and asparagine 194.

Belongs to the acetylglutamate kinase family. ArgB subfamily.

It is found in the cytoplasm. The catalysed reaction is N-acetyl-L-glutamate + ATP = N-acetyl-L-glutamyl 5-phosphate + ADP. It participates in amino-acid biosynthesis; L-arginine biosynthesis; N(2)-acetyl-L-ornithine from L-glutamate: step 2/4. Catalyzes the ATP-dependent phosphorylation of N-acetyl-L-glutamate. The chain is Acetylglutamate kinase from Janthinobacterium sp. (strain Marseille) (Minibacterium massiliensis).